Reading from the N-terminus, the 170-residue chain is Urease accessory protein UreE (170 aa).

It belongs to the UreE family.

Its subcellular location is the cytoplasm. In terms of biological role, involved in urease metallocenter assembly. Binds nickel. Probably functions as a nickel donor during metallocenter assembly. The chain is Urease accessory protein UreE from Helicobacter pylori (strain ATCC 700392 / 26695) (Campylobacter pylori).